The sequence spans 2381 residues: MEQKLVKNTSSLSKIPDHLKEINNIQNILILLTRLNLVRFLFGIFSNLEYIVKLFDFRILNSLILRDLRSSNNQRNKLLLKLLLLLVIPISLYRLNTKSLIERRYLDLAKIVNGYGNSNKVRERLKEHFESSYSSISPNIFNSSNREAITSATGLQEYYSDSPTKAQSYGIIPVSNTIDFSDPDWWKSWIIKDILPSWNISQSKVNEVQMLLSEKSIENLKNFFEFYIDIILCKPYDWKYDFDLYFVMNRNQNRNQDEEIDWKQVNRLDDTLFPSAIVAFCDKILFEVEGPLNRQGHQLDINLNFSRKYLFHTYISLSRREIKNWIDLIQPKGWIFFQDFAEFYIWQSYSNKNSPWKGDRHLLDRTRHILEERFVDPNDLEEDQSITKVQYFLSDIIYNFSEYILSRIEKFNQLETLKKRIRDDSSLITQPLKDIFDNQKIIETNKRHHIENNFLDKEKGSTSSEKNSITTNFFLRFGFYNISLFRKWNWKQFLISNYLPTNIEYIKELNGESHFSDISFLIKNEKEYLENKIFSESKNSAIVDLFPTERRLFDNTIPKEIKYGLLDILSIHELNGSFIDNKQIFEKNRSLKTQEYLFDDSGSSEVNRIVDLWKIKNFEYSFFESSLSPKDCLSKSERYLNNKYSFLFFNKSLFLDSSSLIYSVVNFYINKDYVSSDYSRFKKTFVTKIDQLILRITNPGLLLTEGFSGNSNRYKNFLISKSDSSINQILYKYLKVKNIEYFSQKVLKDLIREYFKIGGINLGKTKEQMVSLWTLSQQKIRPFWDELKEKTNISLISLLTTIYKQNQLISLSSIYTVYSYQYIRILHSDYFLRVKNNFEFWINNDTSNDLTKNIISPDLVNWKINLEKWFNQCIVQIDQYRGVYLYLNVYKWRDGNRQWKSFFSYIVSNKYPIISVESKNLLKSLLLLRNEKISRNHFSKSLFLTKTFINRFLDYSFPYMIEPFLYKLQDIDQFFFYRFPKLLKIPSYIASIKEFFGDENIFSKESKCFLDDKNFVSLTRLQILRDKNLSNFLCNEDICMEGLNDESIFAESNYWLNDVAVTKKISPKSCSDESNTLKLLDYLYNPRLNYNERLRPFEGKFITKGYDSTYKDILNNVPIRYNHQLFLSTPIRPFYGEKDTISFVQSQVFKKLLARSQRFNRQTLGYIDNLYKLLIALTRSNSFSHGNKNSYSFGKDLKNRLQIVNFDIGKSFFEADRSNQYQSFRTSSKLQDESTEYQPYPADELFPEFLSNLENHKMLHWLRRFLLYRYLTPKSFQEMIDNKFLKEKKKELETILLKEEYIIRSFYPININEVLDRISIYKTLQQENISNKWSLFRNYTPWFFTLEWWNYLNNLVSETFPEVLLNTNDLLDSNRSYIIRYINNLLTSLWLELKFRSKNENVDYLISKSDSFLVKEISNQKNKPFFKWSLLRFVNGHNVEFSAIVLLLIFIYGISRHYLPTLLGFNSISLWKRIEIIRYLMDPLQGFYLKKLMHSPSTKFMQTRDLLIYRVKRILKSINHMPFYFFIKGELDIWLYHRNGLDTFRPHKRKLTQHLTTNKIISHYGLNLNYGSNFLIKEPGLNYLRFLVETCQKDLIKYQICNFESAEKWVLSALQQKILFPQKIWQDNSLNIPSYQTPASLQLGSFPSKGILLIGPMETGRSYLIKNLAADSYLPSIRIPVNKLLYNKLDFKNTPATILSKQSLLRLNLLFESAEKMSPCIIWIQDIHELNINRFGHRSEADPKLLLCSVLKNISNSSFNSYTKNNIVIASTHMPTKVDPAIISPNRLDQLINLRILTNCQRQKEFPVLLGVKGFDSKADSAFLKKLGYKTMGYSKRDLSVLANEALLIGITLNTSFVCSDTIRLSLHKQISAVTYTDNESRFSLKYEILFYKIGKAIIRNTLINTSSIDFSFVQNNLLKRRFYFLSNWYLEPAITESTIKEFTILPHILGFLAGFAARDSWFILENKKENFIFIDKVVENDLNLSVAILEGLLTEFSYLEICEKKLDEVFVPPPQSKARNFLNMMQQGLSLNTNKQIVRKIDRYKSLSSVRSERNIPRSIAWSPRVWRISFLRSNIYESIRIPSESNRLYNLIVFYQNQDKLPKRNFDLNKIKSGQSVSHKRKEKFFGYKRSLGNMRQKQIQTLESQLENVLLREHFFKLGISNSSTQYQTQYDSSYQSILFLGGRFIWNSAGLIHPQNNLVFSRLDLFANEETVRRLYITYGVRRDREKHYSNEKIKQFFLHRGYDRNLMTKLVINWWKRLPFAEKKHFEFFNNNQMMRTFLQHPQLFSSVYLHQDCLLEDLQEKYARFNLSIHRQRWIRSNRLLFNDLSIYNMLFESYQYLLNLFLSNRSLLIQLTNILVGKKLILPNEIHDILYYFK.

Residue 1655–1662 participates in ATP binding; sequence GPMETGRS.

The protein belongs to the Ycf2 family.

Its subcellular location is the plastid. The protein localises to the chloroplast stroma. In terms of biological role, probable ATPase of unknown function. Its presence in a non-photosynthetic plant (Epifagus virginiana) and experiments in tobacco indicate that it has an essential function which is probably not related to photosynthesis. The chain is Protein Ycf2 from Angiopteris evecta (Mule's foot fern).